We begin with the raw amino-acid sequence, 149 residues long: MHCPFCSATDTKVIDSRLVADGHQVRRRRECTECHERFTTFEGAELVMPRVIKRDGTRQPFDEEKLRGGMLRAVEKRPVSIDEIEQALTKIKSTLRATGEREVNSEMIGNLMMEQLMSLDKVAYIRFASVYRAFEDVSQFGEAIAKLQK.

Residues 3–34 (CPFCSATDTKVIDSRLVADGHQVRRRRECTEC) fold into a zinc finger. Residues 49 to 139 (PRVIKRDGTR…VYRAFEDVSQ (91 aa)) enclose the ATP-cone domain.

The protein belongs to the NrdR family. The cofactor is Zn(2+).

In terms of biological role, negatively regulates transcription of bacterial ribonucleotide reductase nrd genes and operons by binding to NrdR-boxes. The polypeptide is Transcriptional repressor NrdR (Shewanella frigidimarina (strain NCIMB 400)).